Reading from the N-terminus, the 417-residue chain is Adrenocortical dysplasia protein homolog (417 aa).

A PWI motif is present at residues 11 to 13; sequence PWI. Residue serine 25 is modified to Phosphoserine. Positions 156 to 245 are interaction with POT1; sequence ESASSSAGLT…SSIDSSQKAQ (90 aa). 2 stretches are compositionally biased toward polar residues: residues 237 to 250 and 259 to 292; these read SIDS…NPAS and SGAS…TSPR. Positions 237-309 are disordered; the sequence is SIDSSQKAQE…PCSSTPSSPL (73 aa). Positions 296–309 are enriched in low complexity; sequence PSSTPCSSTPSSPL. Residues serine 313 and serine 317 each carry the phosphoserine modification. Lysine 348 is covalently cross-linked (Glycyl lysine isopeptide (Lys-Gly) (interchain with G-Cter in SUMO2)).

As to quaternary structure, component of the shelterin complex (telosome) composed of TERF1, TERF2, TINF2, TERF2IP ACD and POT1. Forms heterodimers with POT1. Identified in a complex with POT1 and single-stranded telomeric DNA. Interacts with STN1 and TINF2.

Its subcellular location is the nucleus. It is found in the chromosome. It localises to the telomere. Functionally, component of the shelterin complex (telosome) that is involved in the regulation of telomere length and protection. Shelterin associates with arrays of double-stranded TTAGGG repeats added by telomerase and protects chromosome ends. Without its protective activity, telomeres are no longer hidden from the DNA damage surveillance and chromosome ends are inappropriately processed by DNA repair pathways. Promotes binding of POT1 to single-stranded telomeric DNA. Modulates the inhibitory effects of POT1 on telomere elongation. The ACD-POT1 heterodimer enhances telomere elongation by recruiting telomerase to telomeres and increasing its processivity. May play a role in organogenesis. The chain is Adrenocortical dysplasia protein homolog from Rattus norvegicus (Rat).